The sequence spans 622 residues: Dynein axonemal assembly factor 1 (622 aa).

Residues 1 to 80 form a disordered region; sequence MHPEVSEPQA…ARNDRDDRGP (80 aa). Residues 22-42 are compositionally biased toward basic and acidic residues; that stretch reads AGDHGRAGPGVRKEEINETKE. Over residues 48–59 the composition is skewed to low complexity; it reads STTSCQSQKQQS. Residues 62 to 80 show a composition bias toward basic and acidic residues; it reads SRLDCRSGYARNDRDDRGP. LRR repeat units follow at residues 101–123, 124–145, 146–167, 168–189, 190–211, and 215–236; these read ALND…EEYT, GLRC…QAQS, ELRC…EPLQ, KLDA…SCLP, VLNT…QHLR, and RLCV…SVLE. Positions 249 to 288 constitute an LRRCT domain; the sequence is NPVTKHIPNYRRTVTVRLKQLTYLDDRPVFPKDRACAEAW. Residues 326–336 are compositionally biased toward basic and acidic residues; that stretch reads EERKKARDKGE. Positions 326-360 are disordered; it reads EERKKARDKGETPLPDSEESSSTSPEAQDKPPLGE. Positions 337-351 are enriched in low complexity; it reads TPLPDSEESSSTSPE. Phosphoserine is present on residues S349, S464, and S487. Disordered regions lie at residues 481 to 503 and 540 to 622; these read SSLS…EHTP and LETQ…FGLD. A compositionally biased stretch (polar residues) spans 540 to 550; that stretch reads LETQGQVFSTT.

It belongs to the DNAAF1 family.

The protein resides in the cell projection. It is found in the cilium. Functionally, cilium-specific protein required for the stability of the ciliary architecture. Plays a role in cytoplasmic preassembly of dynein arms. Involved in regulation of microtubule-based cilia and actin-based brush border microvilli. In Peromyscus leucopus (White-footed mouse), this protein is Dynein axonemal assembly factor 1 (Dnaaf1).